Here is a 775-residue protein sequence, read N- to C-terminus: Minichromosome maintenance protein 5 (775 aa).

The tract at residues 1 to 22 (MSFDRPEIYSAPVLQGESPNDD) is disordered. The MCM domain maps to 366–573 (LYEILTNSIA…RDISIANHVI (208 aa)). Residue 416–423 (GDPGTAKS) participates in ATP binding. The short motif at 548–551 (SRFD) is the Arginine finger element.

Belongs to the MCM family. Component of the MCM2-7 complex. The complex forms a toroidal hexameric ring with the proposed subunit order MCM2-MCM6-MCM4-MCM7-MCM3-MCM5; loaded onto DNA, forms a head-head double hexamer. Interacts with CSM1.

Its subcellular location is the nucleus. It carries out the reaction ATP + H2O = ADP + phosphate + H(+). Functionally, acts as a component of the MCM2-7 complex (MCM complex) which is the putative replicative helicase essential for 'once per cell cycle' DNA replication initiation and elongation in eukaryotic cells. The active ATPase sites in the MCM2-7 ring are formed through the interaction surfaces of two neighboring subunits such that a critical structure of a conserved arginine finger motif is provided in trans relative to the ATP-binding site of the Walker A box of the adjacent subunit. The six ATPase active sites, however, are likely to contribute differentially to the complex helicase activity; specifically the MCM2-MCM5 association is proposed to be reversible and to mediate a open ring conformation which may facilitate DNA loading. Once loaded onto DNA, double hexamers can slide on dsDNA in the absence of ATPase activity. This chain is Minichromosome maintenance protein 5 (MCM5), found in Saccharomyces cerevisiae (strain ATCC 204508 / S288c) (Baker's yeast).